Consider the following 346-residue polypeptide: FMRFamide-related peptides type HF-1 (346 aa).

An N-terminal signal peptide occupies residues 1–19; the sequence is MTSLCLTIAPAVLSLICLS. A propeptide spanning residues 20 to 45 is cleaved from the precursor; that stretch reads SYGWAEDNNGIHTLDDGDNDPFFRHN. Phenylalanine amide is present on Phe-51. Positions 54-94 are excised as a propeptide; the sequence is AFVPLWDNADDSLVRKNLLTHWSEFPLSPALSSSDVFSRNS. Phe-100 bears the Phenylalanine amide mark. Positions 103 to 109 are excised as a propeptide; the sequence is SYPPYQD. Phe-115 is modified (phenylalanine amide). The propeptide occupies 118–203; sequence SHQPDIDEYL…EILSNEDDLE (86 aa). The disordered stretch occupies residues 137–185; it reads YRKRRSEDGDSKEDGLNRVARSADANQQSKNTQSNKFGKDLQKRETKKE. The segment covering 141 to 152 has biased composition (basic and acidic residues); the sequence is RSEDGDSKEDGL. Over residues 160 to 172 the composition is skewed to polar residues; it reads DANQQSKNTQSNK. The segment covering 173–185 has biased composition (basic and acidic residues); sequence FGKDLQKRETKKE. Residues Phe-209 and Phe-216 each carry the phenylalanine amide modification. A propeptide spanning residues 219-226 is cleaved from the precursor; that stretch reads GDEDESYD. The residue at position 232 (Phe-232) is a Phenylalanine amide. Positions 235–243 are excised as a propeptide; the sequence is SLRHDQEFE. A phenylalanine amide mark is found at Phe-249 and Phe-256. A propeptide spanning residues 259–267 is cleaved from the precursor; that stretch reads GDEDDAREE. Phe-273 carries the post-translational modification Phenylalanine amide. Residues 276–283 constitute a propeptide that is removed on maturation; it reads SSNEDEDI. Residue Phe-290 is modified to Phenylalanine amide. Positions 293–301 are excised as a propeptide; it reads SGNEDGDVD. Phe-307 and Phe-314 each carry phenylalanine amide. Residues 317 to 325 constitute a propeptide that is removed on maturation; that stretch reads SEKEDGDVD. Residues Phe-331 and Phe-338 each carry the phenylalanine amide modification. A propeptide spanning residues 341–346 is cleaved from the precursor; sequence GDSETS.

Belongs to the FARP (FMRFamide related peptide) family. As to expression, central nervous system.

It localises to the secreted. In terms of biological role, can function as both cardioregulatory hormones and transmitters and may regulate cardiovascular function. The sequence is that of FMRFamide-related peptides type HF-1 from Cornu aspersum (Brown garden snail).